Consider the following 556-residue polypeptide: Urocanate hydratase (556 aa).

Residues 52–53 (GG), Q130, 176–178 (GMG), E196, R201, 242–243 (NA), 263–267 (QTSAH), 273–274 (YL), and Y322 each bind NAD(+). C410 is a catalytic residue. G492 contributes to the NAD(+) binding site.

It belongs to the urocanase family. It depends on NAD(+) as a cofactor.

The protein localises to the cytoplasm. The enzyme catalyses 4-imidazolone-5-propanoate = trans-urocanate + H2O. It participates in amino-acid degradation; L-histidine degradation into L-glutamate; N-formimidoyl-L-glutamate from L-histidine: step 2/3. Catalyzes the conversion of urocanate to 4-imidazolone-5-propionate. In Shewanella sediminis (strain HAW-EB3), this protein is Urocanate hydratase.